A 160-amino-acid chain; its full sequence is Transcription elongation factor GreA (160 aa).

The stretch at 1–72 (MAEKTYPMTL…QISSLETKIR (72 aa)) forms a coiled coil.

It belongs to the GreA/GreB family.

Functionally, necessary for efficient RNA polymerase transcription elongation past template-encoded arresting sites. The arresting sites in DNA have the property of trapping a certain fraction of elongating RNA polymerases that pass through, resulting in locked ternary complexes. Cleavage of the nascent transcript by cleavage factors such as GreA or GreB allows the resumption of elongation from the new 3'terminus. GreA releases sequences of 2 to 3 nucleotides. The sequence is that of Transcription elongation factor GreA from Streptococcus pneumoniae (strain ATCC 700669 / Spain 23F-1).